The chain runs to 506 residues: Maturase K (506 aa).

The protein belongs to the intron maturase 2 family. MatK subfamily.

The protein resides in the plastid. The protein localises to the chloroplast. Its function is as follows. Usually encoded in the trnK tRNA gene intron. Probably assists in splicing its own and other chloroplast group II introns. The chain is Maturase K from Calluna vulgaris (Heather).